We begin with the raw amino-acid sequence, 382 residues long: Kelch domain-containing protein 3 (382 aa).

Kelch repeat units lie at residues 25–77 (RVYS…PYMR), 88–138 (TVFL…VLGK), 139–189 (IMYI…TMLG), 191–249 (HMYV…GYNG), and 251–301 (LYIF…IVGD).

As to quaternary structure, component of a CRL2(KLHDC3) complex, also named ECS(KLHDC3) complex, composed of CUL2, Elongin BC (ELOB and ELOC), RBX1 and substrate-specific adapter KLHDC3. May form oligomers as a KLHDC3-ELOB-ELOC complex; this interaction is likely autoinhibitory for the E3 ligase complex.

Its subcellular location is the cytoplasm. It participates in protein modification; protein ubiquitination. Substrate-recognition component of a Cul2-RING (CRL2) E3 ubiquitin-protein ligase complex of the DesCEND (destruction via C-end degrons) pathway, which recognizes a C-degron located at the extreme C terminus of target proteins, leading to their ubiquitination and degradation. The C-degron recognized by the DesCEND pathway is usually a motif of less than ten residues and can be present in full-length proteins, truncated proteins or proteolytically cleaved forms. The CRL2(KLHDC3) complex specifically recognizes proteins with a glycine (Gly) at the C-terminus, leading to their ubiquitination and degradation: recognizes the C-terminal -Arg-(Xaa)n-Arg-Gly, -Arg-(Xaa)n-Lys-Gly, and -Arg-(Xaa)n-Gln-Gly degrons. The CRL2(KLHDC3) complex mediates ubiquitination and degradation of truncated SELENOV and SEPHS2 selenoproteins produced by failed UGA/Sec decoding, which end with a glycine. May be involved in meiotic recombination process. The polypeptide is Kelch domain-containing protein 3 (Rattus norvegicus (Rat)).